Here is a 489-residue protein sequence, read N- to C-terminus: Homoserine O-acetyltransferase (489 aa).

The 373-residue stretch at 63–435 (NALVICHALS…SPEGHDAFLL (373 aa)) folds into the AB hydrolase-1 domain. Serine 162 is an active-site residue. Serine 162 acts as the Nucleophile in catalysis. Residues 247 to 272 (RFGRNVPDPSKRQNINGTERLPTPPN) are disordered. Active-site residues include aspartate 401 and histidine 430.

The protein belongs to the AB hydrolase superfamily. MetX family.

It catalyses the reaction L-homoserine + acetyl-CoA = O-acetyl-L-homoserine + CoA. The protein operates within amino-acid biosynthesis; L-methionine biosynthesis via de novo pathway; O-acetyl-L-homoserine from L-homoserine: step 1/1. Functionally, commits homoserine to the methionine biosynthesis pathway by catalyzing its O-acetylation. The polypeptide is Homoserine O-acetyltransferase (metE) (Emericella nidulans (strain FGSC A4 / ATCC 38163 / CBS 112.46 / NRRL 194 / M139) (Aspergillus nidulans)).